A 154-amino-acid polypeptide reads, in one-letter code: Myoglobin (154 aa).

One can recognise a Globin domain in the interval 2–148 (GLSDQEWQQV…FRNDMASKYK (147 aa)). Position 65 (His65) interacts with nitrite. His65 serves as a coordination point for O2. Residue His94 participates in heme b binding.

The protein belongs to the globin family. Monomeric.

Its subcellular location is the cytoplasm. The protein localises to the sarcoplasm. It carries out the reaction Fe(III)-heme b-[protein] + nitric oxide + H2O = Fe(II)-heme b-[protein] + nitrite + 2 H(+). The catalysed reaction is H2O2 + AH2 = A + 2 H2O. Monomeric heme protein which primary function is to store oxygen and facilitate its diffusion within muscle tissues. Reversibly binds oxygen through a pentacoordinated heme iron and enables its timely and efficient release as needed during periods of heightened demand. Depending on the oxidative conditions of tissues and cells, and in addition to its ability to bind oxygen, it also has a nitrite reductase activity whereby it regulates the production of bioactive nitric oxide. Under stress conditions, like hypoxia and anoxia, it also protects cells against reactive oxygen species thanks to its pseudoperoxidase activity. This chain is Myoglobin (MB), found in Aethia pygmaea (Whiskered auklet).